We begin with the raw amino-acid sequence, 126 residues long: uncharacterized protein (126 aa).

Thr68 is modified (phosphothreonine).

This is an uncharacterized protein from Pseudomonas aeruginosa (strain UCBPP-PA14).